The following is a 721-amino-acid chain: Polyribonucleotide nucleotidyltransferase (721 aa).

Residues Asp495 and Asp501 each coordinate Mg(2+). The region spanning 562–621 is the KH domain; that stretch reads PRLLSFRIDPELIGTVIGPGGRTIKGITERTNTKIDIEDGGIVTIASHDGAAAEEAQKII. The S1 motif domain occupies 631–699; sequence GEVFSGSITR…NRGRINLTLR (69 aa).

It belongs to the polyribonucleotide nucleotidyltransferase family. It depends on Mg(2+) as a cofactor.

It localises to the cytoplasm. It catalyses the reaction RNA(n+1) + phosphate = RNA(n) + a ribonucleoside 5'-diphosphate. Its function is as follows. Involved in mRNA degradation. Catalyzes the phosphorolysis of single-stranded polyribonucleotides processively in the 3'- to 5'-direction. This Synechococcus sp. (strain CC9605) protein is Polyribonucleotide nucleotidyltransferase.